A 615-amino-acid polypeptide reads, in one-letter code: Protein ENHANCED DISEASE RESISTANCE 4 (615 aa).

Disordered regions lie at residues 46-271 (IAPS…DDDE), 292-336 (YKEQ…GRQG), and 549-592 (THDI…RGSP). Polar residues-rich tracts occupy residues 63-89 (NEPQ…SSPG) and 119-129 (GDGTNEIQEQE). A coiled-coil region spans residues 104–129 (MESTEKELDDLELSNGDGTNEIQEQE). Residues 134–148 (DSEKNEREDNSRLES) show a composition bias toward basic and acidic residues. Residues 159 to 168 (GSGSSSGSLS) show a composition bias toward low complexity. Polar residues-rich tracts occupy residues 296-314 (GASS…ITTY) and 552-564 (INAN…TSES). Residues 565 to 577 (PIDKAPSKPEKLR) are compositionally biased toward basic and acidic residues.

Interacts with RLK902. Binds and recruits EDR1 at the powdery mildew (e.g. G.cichoracearum) penetration site on the plasma membrane. Interacts with CHC2. As to expression, expressed in stems and rosette leaves, and weakly in inflorescences. Not detected in roots.

The protein localises to the cell membrane. It localises to the endosome. Plays a negative role in salicylic acid (SA)-mediated resistance to powdery mildew (e.g. Golovinomyces cichoracearum). May modulate plant immunity by regulating the relocation of EDR1 by interacting with CHC2 and modulating endocytosis. In Arabidopsis thaliana (Mouse-ear cress), this protein is Protein ENHANCED DISEASE RESISTANCE 4.